We begin with the raw amino-acid sequence, 431 residues long: Salivary plasminogen activator beta (431 aa).

The N-terminal stretch at M1–R36 is a signal peptide. One can recognise an EGF-like domain in the interval A37 to E75. Disulfide bonds link C41–C52, C46–C63, C65–C74, C82–C163, C103–C145, C134–C158, C168–C299, C211–C227, C219–C288, C313–C388, C345–C361, and C378–C406. In terms of domain architecture, Kringle spans C82–C163. An N-linked (GlcNAc...) asparagine glycan is attached at N139. Positions S180 to R430 constitute a Peptidase S1 domain. Catalysis depends on charge relay system residues H226 and D275. N-linked (GlcNAc...) asparagine glycosylation occurs at N352. The active-site Charge relay system is S382.

The protein belongs to the peptidase S1 family. In terms of assembly, monomer.

Its subcellular location is the secreted. It carries out the reaction Specific cleavage of Arg-|-Val bond in plasminogen to form plasmin.. In terms of biological role, probably essential to support the feeding habits of this exclusively haematophagous animal. Probable potent thrombolytic agent. This chain is Salivary plasminogen activator beta, found in Desmodus rotundus (Vampire bat).